The following is a 76-amino-acid chain: uncharacterized protein (76 aa).

This is an uncharacterized protein from Homo sapiens (Human).